A 735-amino-acid chain; its full sequence is Translation factor GUF1 homolog, chloroplastic (735 aa).

Disordered regions lie at residues 1–38 (MAVP…PSTS) and 106–126 (PENA…GVDN). The transit peptide at 1–47 (MAVPTIPSPACISQSANGSIISTRRSTETNPRQHPSTSYRCAGRVVR) directs the protein to the chloroplast. Residues 11-38 (CISQSANGSIISTRRSTETNPRQHPSTS) are compositionally biased toward polar residues. Residues 106 to 115 (PENAEKDYSK) show a composition bias toward basic and acidic residues. One can recognise a tr-type G domain in the interval 137–319 (SNIRNFSIIA…AVVKKIPPPK (183 aa)). GTP contacts are provided by residues 146–153 (AHIDHGKS), 212–216 (DTPGH), and 266–269 (NKID).

It belongs to the TRAFAC class translation factor GTPase superfamily. Classic translation factor GTPase family. LepA subfamily.

It is found in the plastid. The protein resides in the chloroplast. It carries out the reaction GTP + H2O = GDP + phosphate + H(+). Its function is as follows. Promotes chloroplast protein synthesis. May act as a fidelity factor of the translation reaction, by catalyzing a one-codon backward translocation of tRNAs on improperly translocated ribosomes. This chain is Translation factor GUF1 homolog, chloroplastic, found in Physcomitrium patens (Spreading-leaved earth moss).